We begin with the raw amino-acid sequence, 599 residues long: Proline--tRNA ligase (599 aa).

It belongs to the class-II aminoacyl-tRNA synthetase family. ProS type 1 subfamily. In terms of assembly, homodimer.

The protein resides in the cytoplasm. It catalyses the reaction tRNA(Pro) + L-proline + ATP = L-prolyl-tRNA(Pro) + AMP + diphosphate. Its function is as follows. Catalyzes the attachment of proline to tRNA(Pro) in a two-step reaction: proline is first activated by ATP to form Pro-AMP and then transferred to the acceptor end of tRNA(Pro). As ProRS can inadvertently accommodate and process non-cognate amino acids such as alanine and cysteine, to avoid such errors it has two additional distinct editing activities against alanine. One activity is designated as 'pretransfer' editing and involves the tRNA(Pro)-independent hydrolysis of activated Ala-AMP. The other activity is designated 'posttransfer' editing and involves deacylation of mischarged Ala-tRNA(Pro). The misacylated Cys-tRNA(Pro) is not edited by ProRS. This is Proline--tRNA ligase from Bifidobacterium animalis subsp. lactis (strain AD011).